A 306-amino-acid polypeptide reads, in one-letter code: Methionyl-tRNA formyltransferase (306 aa).

108–111 is a binding site for (6S)-5,6,7,8-tetrahydrofolate; the sequence is SLLP.

It belongs to the Fmt family.

It carries out the reaction L-methionyl-tRNA(fMet) + (6R)-10-formyltetrahydrofolate = N-formyl-L-methionyl-tRNA(fMet) + (6S)-5,6,7,8-tetrahydrofolate + H(+). Functionally, attaches a formyl group to the free amino group of methionyl-tRNA(fMet). The formyl group appears to play a dual role in the initiator identity of N-formylmethionyl-tRNA by promoting its recognition by IF2 and preventing the misappropriation of this tRNA by the elongation apparatus. In Pseudarthrobacter chlorophenolicus (strain ATCC 700700 / DSM 12829 / CIP 107037 / JCM 12360 / KCTC 9906 / NCIMB 13794 / A6) (Arthrobacter chlorophenolicus), this protein is Methionyl-tRNA formyltransferase.